The chain runs to 954 residues: Mycolic acid-containing lipids exporter MmpL11 (954 aa).

A run of 12 helical transmembrane segments spans residues 11 to 31 (FRWAVFATWLLLLVPSIYLAL), 188 to 208 (IVLIVLLAVFGSLAAAALPLV), 214 to 234 (VVVTMGLVYLLSMFTTMSVFV), 235 to 255 (TSTVSMFGIAVAIDYSLFILM), 279 to 299 (GLAVALSGLTVIASVTGIYLI), 312 to 334 (ILAVAVAVLTSTTLTPAVLATFG), 373 to 393 (AIAAAILLLVLAAPAFNMVLG), 529 to 549 (TQPLVFVFVALIAFVMLLVSI), 559 to 579 (VLMTVLSVAAAYGSLVVVFQW), 597 to 617 (IPPLVLAMTFGLSMDYEIFLL), 648 to 668 (AALIMIAVFIGFAFAGMPLVA), and 670 to 690 (LGVACAVAIAVDATVVRLVLV).

The protein localises to the cell inner membrane. Functionally, contributes to cell wall biosynthesis and biofilm formation. Transports the mycolic acid-containing lipids monomeromycolyl diacylglycerol (MMDAG) and mycolate ester wax (WE) to the bacterial surface. The protein is Mycolic acid-containing lipids exporter MmpL11 of Mycolicibacterium smegmatis (strain ATCC 700084 / mc(2)155) (Mycobacterium smegmatis).